Reading from the N-terminus, the 1121-residue chain is Phosphatidylinositol 4-kinase beta 1 (1121 aa).

Residues 1 to 143 (MPMGRFLSLV…SRIQEKCQIA (143 aa)) enclose the PIK helical domain. A compositionally biased stretch (polar residues) spans 187–207 (PPTQKSLSFSPSPGTNVQDDG). A disordered region spans residues 187 to 210 (PPTQKSLSFSPSPGTNVQDDGSQL). Repeat copies occupy residues 212–231 (AEDN…RDAL), 244–263 (SEKE…EGDE), 266–285 (PNSE…EDED), 288–306 (NSSE…ESEE), 309–328 (SSSD…DEEE), 331–350 (ANSD…EDEE), 353–372 (PNSE…EDDK), 380–398 (EDKD…DDKR), and 420–438 (DERE…DDKK). The 11 X 20 AA approximate repeats (PPC) stretch occupies residues 212–508 (AEDNKIFKKL…FRDRDQSVED (297 aa)). Disordered stretches follow at residues 343-421 (ESKN…EEDE), 435-489 (DDKK…ESSP), 506-544 (VEDS…NTAS), and 794-825 (AAAA…NGGM). Composition is skewed to basic and acidic residues over residues 358–376 (FFKK…VPKE), 383–405 (DGFL…EKNE), 412–421 (ADKKSGEEDE), and 435–445 (DDKKDIVKVDD). The span at 446-455 (GNESEGDESP) shows a compositional bias: acidic residues. S449 and S454 each carry phosphoserine. 2 repeat units span residues 454–472 (SPEF…EDAK) and 489–508 (PGTE…SVED). The segment covering 466–475 (IHPEDAKPTS) has biased composition (basic and acidic residues). The segment covering 476 to 489 (ENENSSNGLVESSP) has biased composition (polar residues). Positions 835 to 1106 (ELWEGKRDRI…LISSSLDAWR (272 aa)) constitute a PI3K/PI4K catalytic domain. Positions 841–847 (RDRIRKA) are G-loop. A catalytic loop region spans residues 969–977 (QVKDRHNGN). The segment at 988–1012 (HIDFGFMLSNSPGGVNFESAPFKLT) is activation loop.

It belongs to the PI3/PI4-kinase family. Type III PI4K subfamily. As to quaternary structure, interacts with AHK2, CBL1 and RABA4D. In terms of tissue distribution, expressed constitutively in leaves, roots, flowers, and stems.

Its subcellular location is the cell membrane. The protein resides in the golgi apparatus. It localises to the trans-Golgi network. The protein localises to the cytoplasmic vesicle membrane. It carries out the reaction a 1,2-diacyl-sn-glycero-3-phospho-(1D-myo-inositol) + ATP = a 1,2-diacyl-sn-glycero-3-phospho-(1D-myo-inositol 4-phosphate) + ADP + H(+). Its activity is regulated as follows. Stimulated by phosphatidylinositol 4-phosphate (PtdIns4P). Slightly repressed by phosphatidyl-choline (PtdCho), wortmannin and adenosine. Functionally, acts on phosphatidylinositol (PtdIns) in the first committed step in the production of the second messenger inositol-1,4,5-trisphosphate. Necessary for proper organization of the trans-Golgi network (TGN) and post-Golgi secretion in root hairs. Together with PI4KB2, required during polarized root hair expansion and pollen tube elongation. Functions redundantly with PI4KB2 upstream of the cold response phosphoinositide-dependent phospholipase C (PI-PLC) pathway. The protein is Phosphatidylinositol 4-kinase beta 1 of Arabidopsis thaliana (Mouse-ear cress).